A 273-amino-acid chain; its full sequence is Exosome complex component MTR3 (273 aa).

Positions 1–36 (MPGDHRRIRGPEESQPPQLYAAEDDETPAARDPTRL) are disordered.

This sequence belongs to the RNase PH family. In terms of assembly, component of the RNA exosome core complex (Exo-9), composed of EXOSC1, EXOSC2, EXOSC3, EXOSC4, EXOSC5, EXOSC6, EXOSC7, EXOSC8 and EXOSC9; within the complex interacts with EXOSC1, EXOSC7 and EXOSC8. The catalytically inactive RNA exosome core complex (Exo-9) associates with the catalytic subunit EXOSC10/RRP6. Exo-9 may associate with DIS3 to form the nucleolar exosome complex, or DIS3L to form the cytoplasmic exosome complex. Exo-9 is formed by a hexameric base ring consisting of the heterodimers EXOSC4-EXOSC9, EXOSC5-EXOSC8 and EXOSC6-EXOSC7, and a cap ring consisting of EXOSC1, EXOSC2 and EXOSC3. The RNA exosome complex associates with cofactors EXOSC10/RRP6, C1D/RRP47, MPHOSPH6/MPP6 and MTREX/MTR4.

It localises to the cytoplasm. It is found in the nucleus. The protein resides in the nucleolus. Non-catalytic component of the RNA exosome complex which has 3'-&gt;5' exoribonuclease activity and participates in a multitude of cellular RNA processing and degradation events. In the nucleus, the RNA exosome complex is involved in proper maturation of stable RNA species such as rRNA, snRNA and snoRNA, in the elimination of RNA processing by-products and non-coding 'pervasive' transcripts, such as antisense RNA species and promoter-upstream transcripts (PROMPTs), and of mRNAs with processing defects, thereby limiting or excluding their export to the cytoplasm. The RNA exosome may be involved in Ig class switch recombination (CSR) and/or Ig variable region somatic hypermutation (SHM) by targeting AICDA deamination activity to transcribed dsDNA substrates. In the cytoplasm, the RNA exosome complex is involved in general mRNA turnover and specifically degrades inherently unstable mRNAs containing AU-rich elements (AREs) within their 3' untranslated regions, and in RNA surveillance pathways, preventing translation of aberrant mRNAs. It seems to be involved in degradation of histone mRNA. The catalytic inactive RNA exosome core complex of 9 subunits (Exo-9) is proposed to play a pivotal role in the binding and presentation of RNA for ribonucleolysis, and to serve as a scaffold for the association with catalytic subunits and accessory proteins or complexes. This chain is Exosome complex component MTR3 (Exosc6), found in Mus musculus (Mouse).